The following is an 89-amino-acid chain: Small ribosomal subunit protein uS14 (89 aa).

Belongs to the universal ribosomal protein uS14 family. As to quaternary structure, part of the 30S ribosomal subunit. Contacts proteins S3 and S10.

Its function is as follows. Binds 16S rRNA, required for the assembly of 30S particles and may also be responsible for determining the conformation of the 16S rRNA at the A site. The sequence is that of Small ribosomal subunit protein uS14 from Leuconostoc citreum (strain KM20).